Reading from the N-terminus, the 2947-residue chain is 3'-5' exoribonuclease HELZ2 (2947 aa).

Residues 85–114 (PMRYQVCHYYRPGLGCRRHWNRCTFARSPE) form a C3H1-type 1 zinc finger. Residues 167-187 (CFTCCPPCLCPVDPRGHCPKH) form a C2H2-type zinc finger. The C3H1-type 2 zinc finger occupies 221-245 (YCMYVGRGVPCRHGASRCEYAHSAV). A C2H2-type; atypical zinc finger spans residues 289 to 311 (CHACLVTCNSQEAFENHCSSLEH). The 549-residue stretch at 769 to 1317 (VGLIAGRRPE…ELLDESQQVT (549 aa)) folds into the UvrD-like helicase ATP-binding domain. Residue 790–797 (GPFGTGKT) coordinates ATP. The interaction with THRAP3 stretch occupies residues 809–1290 (QQPHTKVLIC…GGMSEEDSES (482 aa)). The DEAA box motif lies at 913 to 916 (DEAA). Residues 1260 to 1292 (EDTASGNSASRDAAAEVSTLEGGMSEEDSESDF) are disordered. 4 consecutive short sequence motifs (LXXLL motif) follow at residues 1306–1310 (LKELL), 1348–1352 (LWKFL), 1403–1407 (LVQIL), and 2240–2244 (LEGLP). Arginine 2381 carries the omega-N-methylarginine modification. An interaction with THRAP3 region spans residues 2413–2947 (PEPCRGNWPR…RVQRKSALSS (535 aa)). The 278-residue stretch at 2449-2726 (LNQSQDRAVR…IMLDTQYRMH (278 aa)) folds into the UvrD-like helicase ATP-binding 2 domain. 2470–2477 (GPPGTGKT) is an ATP binding site. The LXXLL motif 5 signature appears at 2525-2529 (LGGLL).

The protein belongs to the DNA2/NAM7 helicase family. Interacts with PPARA (via DNA-binding domain) and PPARG; the interaction stimulates the transcriptional activity of PPARA and PPARG. Interacts with THRAP3; the interaction is direct and HELZ2 and THRAP3 synergistically enhance the transcriptional activity of PPARG. It is probably part of the peroxisome proliferator activated receptor alpha interacting complex (PRIC).

It is found in the cytoplasm. The catalysed reaction is Exonucleolytic cleavage in the 3'- to 5'-direction to yield nucleoside 5'-phosphates.. The enzyme catalyses ATP + H2O = ADP + phosphate + H(+). Can degrade highly structured RNAs through its concerted ATP-dependent RNA helicase and 3' to 5' exoribonuclease activities. Shows a strong preference for pyrimidine over purine residues for its nuclease activity. Acts as a transcriptional coactivator for a number of nuclear receptors including PPARA, PPARG, THRA, THRB and RXRA. This Mus musculus (Mouse) protein is 3'-5' exoribonuclease HELZ2 (Helz2).